Reading from the N-terminus, the 282-residue chain is NADPH-dependent 7-cyano-7-deazaguanine reductase (282 aa).

Position 88 to 90 (isoleucine 88 to serine 90) interacts with substrate. NADPH is bound at residue serine 90–lysine 91. Cysteine 189 functions as the Thioimide intermediate in the catalytic mechanism. The active-site Proton donor is the aspartate 196. Residue histidine 228–glutamate 229 coordinates substrate. Arginine 257–glycine 258 provides a ligand contact to NADPH.

It belongs to the GTP cyclohydrolase I family. QueF type 2 subfamily. Homodimer.

The protein localises to the cytoplasm. It carries out the reaction 7-aminomethyl-7-carbaguanine + 2 NADP(+) = 7-cyano-7-deazaguanine + 2 NADPH + 3 H(+). Its pathway is tRNA modification; tRNA-queuosine biosynthesis. Its function is as follows. Catalyzes the NADPH-dependent reduction of 7-cyano-7-deazaguanine (preQ0) to 7-aminomethyl-7-deazaguanine (preQ1). The chain is NADPH-dependent 7-cyano-7-deazaguanine reductase from Photorhabdus laumondii subsp. laumondii (strain DSM 15139 / CIP 105565 / TT01) (Photorhabdus luminescens subsp. laumondii).